The following is a 401-amino-acid chain: Nicotinate phosphoribosyltransferase (401 aa).

A Phosphohistidine; by autocatalysis modification is found at His-224.

It belongs to the NAPRTase family. Post-translationally, transiently phosphorylated on a His residue during the reaction cycle. Phosphorylation strongly increases the affinity for substrates and increases the rate of nicotinate D-ribonucleotide production. Dephosphorylation regenerates the low-affinity form of the enzyme, leading to product release.

The catalysed reaction is nicotinate + 5-phospho-alpha-D-ribose 1-diphosphate + ATP + H2O = nicotinate beta-D-ribonucleotide + ADP + phosphate + diphosphate. It participates in cofactor biosynthesis; NAD(+) biosynthesis; nicotinate D-ribonucleotide from nicotinate: step 1/1. Catalyzes the synthesis of beta-nicotinate D-ribonucleotide from nicotinate and 5-phospho-D-ribose 1-phosphate at the expense of ATP. In Pseudomonas putida (strain ATCC 47054 / DSM 6125 / CFBP 8728 / NCIMB 11950 / KT2440), this protein is Nicotinate phosphoribosyltransferase.